We begin with the raw amino-acid sequence, 335 residues long: MDVDAAVVKRIALWVYETCSVFNLFYCITLSLAIKTSKNNALPATYIYNMAISNALLVIFGIMVYILPYYMSDKTYKTYRDSIGAMISVGVTFNYLHPMLTLILMTINRIAVVVSMQASQLFTSSKIWLYTSFHMTANFACLIIPYLSECRINYDIRKVGFISECAPDRHQITTFSNYYSVFFPFVAFFFNVLVIINFKLQRSPTYTKIKNMFRRGNGDQFTSMPSDVLKAKKKTERMLMIQAFITAFYLSVYELTSLVLRVVPELFGNLSLDGKLAFTYFRLAQVPCHVFLVYFIFTPVTRKIYMDFVRERVFCMKPAKKKTIKVSATTTSTKK.

Topologically, residues 1 to 10 are extracellular; that stretch reads MDVDAAVVKR. A helical transmembrane segment spans residues 11–31; that stretch reads IALWVYETCSVFNLFYCITLS. Residues 32-46 are Cytoplasmic-facing; it reads LAIKTSKNNALPATY. The helical transmembrane segment at 47-67 threads the bilayer; that stretch reads IYNMAISNALLVIFGIMVYIL. Topologically, residues 68 to 82 are extracellular; sequence PYYMSDKTYKTYRDS. Residues 83-103 form a helical membrane-spanning segment; sequence IGAMISVGVTFNYLHPMLTLI. The Cytoplasmic portion of the chain corresponds to 104–126; the sequence is LMTINRIAVVVSMQASQLFTSSK. Residues 127–147 traverse the membrane as a helical segment; the sequence is IWLYTSFHMTANFACLIIPYL. Over 148–177 the chain is Extracellular; it reads SECRINYDIRKVGFISECAPDRHQITTFSN. A helical transmembrane segment spans residues 178–198; sequence YYSVFFPFVAFFFNVLVIINF. At 199–238 the chain is on the cytoplasmic side; it reads KLQRSPTYTKIKNMFRRGNGDQFTSMPSDVLKAKKKTERM. The helical transmembrane segment at 239–259 threads the bilayer; that stretch reads LMIQAFITAFYLSVYELTSLV. The Extracellular segment spans residues 260–276; it reads LRVVPELFGNLSLDGKL. Residues 277-297 traverse the membrane as a helical segment; it reads AFTYFRLAQVPCHVFLVYFIF. Over 298–319 the chain is Cytoplasmic; the sequence is TPVTRKIYMDFVRERVFCMKPA.

The protein belongs to the nematode receptor-like protein srxa family.

The protein resides in the membrane. The polypeptide is Serpentine receptor class XA 10 (srxa-10) (Caenorhabditis elegans).